Here is a 488-residue protein sequence, read N- to C-terminus: Germacrene A hydroxylase (488 aa).

Residues 1–6 are Cytoplasmic-facing; sequence MELSLT. A helical; Signal-anchor for type II membrane protein transmembrane segment spans residues 7 to 23; sequence TSIALATIVLILYKLAT. The Lumenal segment spans residues 24-488; it reads RPKSNKKRLP…KTELILVPSF (465 aa). Residues Asn260 and Asn379 are each glycosylated (N-linked (GlcNAc...) asparagine). Residue Cys432 participates in heme binding.

This sequence belongs to the cytochrome P450 family. It depends on heme as a cofactor.

It is found in the endoplasmic reticulum membrane. Its subcellular location is the microsome membrane. It catalyses the reaction (+)-(R)-germacrene A + 3 reduced [NADPH--hemoprotein reductase] + 3 O2 = germacra-1(10),4,11(13)-trien-12-oate + 3 oxidized [NADPH--hemoprotein reductase] + 4 H2O + 4 H(+). The protein operates within secondary metabolite biosynthesis; terpenoid biosynthesis. With respect to regulation, inhibited by cytochrome C, miconazole, aminobenzotriazole, metyrapone and clotrimazole. Involved in the biosynthesis of germacrene-derived sesquiterpene lactones. Catalyzes three consecutive oxidations of germacrene A to produce germacrene A acid. Could also catalyze the three-step oxidation of non-natural substrate amorphadiene to artemisinic acid. Can use beta-elemene as substrate. The chain is Germacrene A hydroxylase from Cichorium intybus (Chicory).